The sequence spans 195 residues: dITP/XTP pyrophosphatase (195 aa).

Substrate is bound at residue 8 to 13 (SNNQGK). 2 residues coordinate Mg(2+): E39 and D68. Catalysis depends on D68, which acts as the Proton acceptor. Substrate is bound by residues S69, 149-152 (FGYD), K172, and 177-178 (HR).

It belongs to the HAM1 NTPase family. Homodimer. Requires Mg(2+) as cofactor.

It catalyses the reaction XTP + H2O = XMP + diphosphate + H(+). The enzyme catalyses dITP + H2O = dIMP + diphosphate + H(+). The catalysed reaction is ITP + H2O = IMP + diphosphate + H(+). Functionally, pyrophosphatase that catalyzes the hydrolysis of nucleoside triphosphates to their monophosphate derivatives, with a high preference for the non-canonical purine nucleotides XTP (xanthosine triphosphate), dITP (deoxyinosine triphosphate) and ITP. Seems to function as a house-cleaning enzyme that removes non-canonical purine nucleotides from the nucleotide pool, thus preventing their incorporation into DNA/RNA and avoiding chromosomal lesions. This Staphylococcus aureus (strain MRSA252) protein is dITP/XTP pyrophosphatase.